Reading from the N-terminus, the 193-residue chain is Large ribosomal subunit protein bL17m (193 aa).

The protein belongs to the bacterial ribosomal protein bL17 family. In terms of assembly, component of the mitochondrial large ribosomal subunit (mt-LSU). Mature N.crassa 74S mitochondrial ribosomes consist of a small (37S) and a large (54S) subunit. The 37S small subunit contains a 16S ribosomal RNA (16S mt-rRNA) and 32 different proteins. The 54S large subunit contains a 23S rRNA (23S mt-rRNA) and 42 different proteins.

The protein resides in the mitochondrion. Component of the mitochondrial ribosome (mitoribosome), a dedicated translation machinery responsible for the synthesis of mitochondrial genome-encoded proteins, including at least some of the essential transmembrane subunits of the mitochondrial respiratory chain. The mitoribosomes are attached to the mitochondrial inner membrane and translation products are cotranslationally integrated into the membrane. The polypeptide is Large ribosomal subunit protein bL17m (mrpl8) (Neurospora crassa (strain ATCC 24698 / 74-OR23-1A / CBS 708.71 / DSM 1257 / FGSC 987)).